Consider the following 376-residue polypeptide: Cytochrome b (376 aa).

4 helical membrane-spanning segments follow: residues 28–48 (YGFL…FLAS), 72–94 (WCFR…LHIL), 107–127 (SWIS…IGYV), and 169–189 (FFVL…IHIF). Positions 78 and 92 each coordinate heme b. Residues histidine 173 and histidine 187 each contribute to the heme b site. An a ubiquinone-binding site is contributed by histidine 192. Transmembrane regions (helical) follow at residues 214–234 (LLSL…IQSI), 274–294 (IPSK…LFLL), 317–337 (VPII…CPLP), and 340–360 (IFIL…LFSL).

It belongs to the cytochrome b family. The main subunits of complex b-c1 are: cytochrome b, cytochrome c1 and the Rieske protein. The cofactor is heme b.

Its subcellular location is the mitochondrion inner membrane. Its function is as follows. Component of the ubiquinol-cytochrome c reductase complex (complex III or cytochrome b-c1 complex) that is part of the mitochondrial respiratory chain. The b-c1 complex mediates electron transfer from ubiquinol to cytochrome c. Contributes to the generation of a proton gradient across the mitochondrial membrane that is then used for ATP synthesis. This Plasmodium berghei protein is Cytochrome b (MT-CYB).